The primary structure comprises 186 residues: Elongation factor P (186 aa).

The protein belongs to the elongation factor P family.

The protein resides in the cytoplasm. The protein operates within protein biosynthesis; polypeptide chain elongation. Functionally, involved in peptide bond synthesis. Stimulates efficient translation and peptide-bond synthesis on native or reconstituted 70S ribosomes in vitro. Probably functions indirectly by altering the affinity of the ribosome for aminoacyl-tRNA, thus increasing their reactivity as acceptors for peptidyl transferase. This chain is Elongation factor P, found in Laribacter hongkongensis (strain HLHK9).